A 153-amino-acid chain; its full sequence is Putative type II secretion system protein M (153 aa).

The Cytoplasmic segment spans residues 1-16; the sequence is MIKSWWAEKSTSEKQI. Residues 17 to 37 form a helical membrane-spanning segment; that stretch reads VAALAVLSLGVFCWLGVIKPI. The Periplasmic portion of the chain corresponds to 38–153; it reads DTYIAEHQSH…LRHLSFREQQ (116 aa).

This sequence belongs to the GSP M family. Type II secretion system is composed of four main components: the outer membrane complex, the inner membrane complex, the cytoplasmic secretion ATPase and the periplasm-spanning pseudopilus. Forms homodimers. Interacts with GspL. Interacts with GspE and GspF.

The protein localises to the cell inner membrane. In terms of biological role, inner membrane component of the type II secretion system required for the energy-dependent secretion of extracellular factors such as proteases and toxins from the periplasm. Plays a role in the complex assembly and recruits GspL resulting in a stable complex in the inner membrane. Provides thus a link between the energy-providing GspE protein in the cytoplasm and the rest of the T2SS machinery. The sequence is that of Putative type II secretion system protein M (gspM) from Escherichia coli (strain K12).